We begin with the raw amino-acid sequence, 166 residues long: MQIILLQRIVNLGKLGETVDVKPGYGRNFLIPLGKALPATKANIEKFEARRAELEAEEAKEVAVAQERADALADVNVIMRAKSGDEGKLFGSIGTRDIAEALTNSGLEVDRAEIKLPEGTLRQIGEYNVDIQLHHDVTATILVTILSEDGDNEDLDENDATDENEE.

Belongs to the bacterial ribosomal protein bL9 family.

Its function is as follows. Binds to the 23S rRNA. This chain is Large ribosomal subunit protein bL9, found in Psychrobacter arcticus (strain DSM 17307 / VKM B-2377 / 273-4).